The sequence spans 676 residues: Mediator of RNA polymerase II transcription subunit 17 (676 aa).

Disordered stretches follow at residues 27-68 (IGSK…QFSN) and 117-176 (IEND…TQDT). Low complexity predominate over residues 29-40 (SKSTSPHSNSTS). 2 stretches are compositionally biased toward basic and acidic residues: residues 47 to 56 (HNTENEEVDN) and 120 to 134 (DNGKQESKDDTKAED). Positions 135 to 145 (GIDTMDIDQND) are enriched in acidic residues. Residues 146 to 160 (NSEANTNDIGYNEWS) are compositionally biased toward polar residues.

It belongs to the Mediator complex subunit 17 family. In terms of assembly, component of the Mediator complex.

It is found in the nucleus. Its function is as follows. Component of the Mediator complex, a coactivator involved in the regulated transcription of nearly all RNA polymerase II-dependent genes. Mediator functions as a bridge to convey information from gene-specific regulatory proteins to the basal RNA polymerase II transcription machinery. Mediator is recruited to promoters by direct interactions with regulatory proteins and serves as a scaffold for the assembly of a functional preinitiation complex with RNA polymerase II and the general transcription factors. The protein is Mediator of RNA polymerase II transcription subunit 17 (SRB4) of Candida glabrata (strain ATCC 2001 / BCRC 20586 / JCM 3761 / NBRC 0622 / NRRL Y-65 / CBS 138) (Yeast).